We begin with the raw amino-acid sequence, 247 residues long: E3 ubiquitin-protein ligase RNF182 (247 aa).

The RING-type zinc finger occupies 20–68 (CKICYNRYNLKQRKPKVLECCHRVCAKCLYKIIDFGDSPQGVIVCPFCR). The next 2 helical transmembrane spans lie at 184–204 (VLVW…IYLL) and 211–231 (LGVV…VYGF).

As to quaternary structure, interacts with ATP6V0C.

It is found in the membrane. It localises to the cytoplasm. It carries out the reaction S-ubiquitinyl-[E2 ubiquitin-conjugating enzyme]-L-cysteine + [acceptor protein]-L-lysine = [E2 ubiquitin-conjugating enzyme]-L-cysteine + N(6)-ubiquitinyl-[acceptor protein]-L-lysine.. The protein operates within protein modification; protein ubiquitination. In terms of biological role, E3 ubiquitin-protein ligase that mediates the ubiquitination of ATP6V0C and targets it to degradation via the ubiquitin-proteasome pathway. Also plays a role in the inhibition of TLR-triggered innate immune response by mediating 'Lys'-48-linked ubiquitination and subsequent degradation of NF-kappa-B component RELA. This Rattus norvegicus (Rat) protein is E3 ubiquitin-protein ligase RNF182 (Rnf182).